The chain runs to 191 residues: Probable GTP-binding protein EngB (191 aa).

Residues 22 to 191 (DFDHFLILGR…KLINEEFSNE (170 aa)) form the EngB-type G domain. Residues 30-37 (GRSNVGKS), 57-61 (GKTIT), 75-78 (DAPG), 142-145 (TKYD), and 172-174 (TSS) each bind GTP. Positions 37 and 59 each coordinate Mg(2+).

Belongs to the TRAFAC class TrmE-Era-EngA-EngB-Septin-like GTPase superfamily. EngB GTPase family. Requires Mg(2+) as cofactor.

Necessary for normal cell division and for the maintenance of normal septation. In Acholeplasma laidlawii (strain PG-8A), this protein is Probable GTP-binding protein EngB.